Reading from the N-terminus, the 800-residue chain is MSLAYSQATSLLLSSTTRGGVPSLMHIPATNSPARINTGATPFWKLPFPARPLRQYKSITRARNQVILTAEKSVDVDTEKNTHHQKATAETTRELVERIRWMLQNMDDGELSVSPYDTAWVALVEDIGGSGRPQFPTSLEWISNNQYPDGSWGDRKFLFYDRILNTLACVVALKTWNMHPDKCEKGLKFIKENIHSLENENEEYMPVGFEVAFPSLIETAKKLGIEIPDDSPGMKDIYAKRHLKLKKIPMDLLHKMPTSLLFSLEGMKGLDWQKLLNLRFEGSFLSSPSSTAYALQHTKDELSLQYLLKAIKKFNGGVPNAYPVDMFEHLWSVDRLQRLGISRYFEPEIEECMKYAYRYWTDKGICWARNTNVQDVDDSSMGFRLLRLHSFPVTIDAFKQFEKGGEFCSIPGQSTHAITGMYNIFRASQVLFPGDHILADARKYSAKFLHQKRVNEAIVDKWIITKDLPGEVGYALDVPFYASLPRLEARFFLEHYGGDDDVWIGKTLYRMLYVNCDTYLELAKLDYNVCQAVHQHEWTNIRRWYKDCSVGEFRLAERSLLRAYYIAASTVFEPERSGERLAWAKTAILLETILSQKLHSEEKHTVVDEFKHGSISISGNGRRHQTRISLAETLIYTVNQLSSDIKQAHGRDIHQQLHHAWQKWLTTWEGRGNLGEAEAELLVRTLHLSSGLDESWFSHPKYQQLLEVTSKVCHQLRLFQNRKMHDPKGCTIDLVTGTTFQIEAGMQELVKLVFTKSSEDLDAHTKQSFFAIARSFYYTAYCDPEAIESHVDKVLFDKVV.

A chloroplast-targeting transit peptide spans 1 to 75 (MSLAYSQATS…VILTAEKSVD (75 aa)). Residue lysine 244 participates in substrate binding. Residues aspartate 375 and aspartate 377 each coordinate Mg(2+). The DXDD motif signature appears at 375–378 (DVDD). Lysine 461 contacts substrate.

The protein belongs to the terpene synthase family. It depends on Mg(2+) as a cofactor. In terms of tissue distribution, mostly expressed in trichomes of leaves and fruits.

It localises to the plastid. The protein resides in the chloroplast. It catalyses the reaction (2E,6E,10E)-geranylgeranyl diphosphate = (+)-kolavenyl diphosphate. It functions in the pathway secondary metabolite biosynthesis; terpenoid biosynthesis. Involved in the biosynthesis of labdane-type diterpenoid including cleroda-dienols, and peregrinol lactones and furan derivatives, dopaminergic diterpenoids that can bind to dopamine receptors in the human pituitary gland, have probably ability to lower prolactin levels, and are used to treat menstrual cycle disorders (e.g. premenstrual syndrome and mastodynia). Terpene synthase that produces kolavenyl diphosphate from geranylgeranyl diphosphate (GGPP). The polypeptide is Kolavenyl diphosphate synthase TPS5, chloroplastic (Vitex agnus-castus (Chaste tree)).